Here is a 293-residue protein sequence, read N- to C-terminus: Cytidine deaminase (293 aa).

CMP/dCMP-type deaminase domains are found at residues 47–166 and 186–293; these read EDRA…FGPA and ESED…YQAV. 88-90 lines the substrate pocket; it reads NME. His-101 is a Zn(2+) binding site. Catalysis depends on Glu-103, which acts as the Proton donor. Positions 128 and 131 each coordinate Zn(2+).

Belongs to the cytidine and deoxycytidylate deaminase family. In terms of assembly, homodimer. The cofactor is Zn(2+).

It catalyses the reaction cytidine + H2O + H(+) = uridine + NH4(+). It carries out the reaction 2'-deoxycytidine + H2O + H(+) = 2'-deoxyuridine + NH4(+). This enzyme scavenges exogenous and endogenous cytidine and 2'-deoxycytidine for UMP synthesis. This Aeromonas salmonicida (strain A449) protein is Cytidine deaminase.